Here is a 393-residue protein sequence, read N- to C-terminus: Acetate kinase (393 aa).

Asparagine 7 is a Mg(2+) binding site. ATP is bound at residue lysine 14. Position 87 (arginine 87) interacts with substrate. Aspartate 144 (proton donor/acceptor) is an active-site residue. ATP contacts are provided by residues histidine 202 to glycine 206, aspartate 277 to arginine 279, and glycine 326 to asparagine 330. Glutamate 380 contributes to the Mg(2+) binding site.

It belongs to the acetokinase family. As to quaternary structure, homodimer. Mg(2+) serves as cofactor. It depends on Mn(2+) as a cofactor.

It localises to the cytoplasm. It carries out the reaction acetate + ATP = acetyl phosphate + ADP. It functions in the pathway metabolic intermediate biosynthesis; acetyl-CoA biosynthesis; acetyl-CoA from acetate: step 1/2. In terms of biological role, catalyzes the formation of acetyl phosphate from acetate and ATP. Can also catalyze the reverse reaction. This Mycoplasmopsis pulmonis (strain UAB CTIP) (Mycoplasma pulmonis) protein is Acetate kinase.